Reading from the N-terminus, the 555-residue chain is CTP synthase (555 aa).

The amidoligase domain stretch occupies residues 1-265 (MTRYIFITGG…GNRVCEKLNI (265 aa)). Residue serine 13 coordinates CTP. Serine 13 serves as a coordination point for UTP. Residues 14 to 19 (SLGKGI) and aspartate 71 each bind ATP. 2 residues coordinate Mg(2+): aspartate 71 and glutamate 139. CTP-binding positions include 146–148 (DIE), 186–191 (KTKPTQ), and lysine 222. UTP is bound by residues 186 to 191 (KTKPTQ) and lysine 222. The 252-residue stretch at 290-541 (TVAVVGKYVD…IKAGLAAKEA (252 aa)) folds into the Glutamine amidotransferase type-1 domain. L-glutamine is bound at residue glycine 351. Residue cysteine 378 is the Nucleophile; for glutamine hydrolysis of the active site. L-glutamine contacts are provided by residues 379–382 (LGMQ), glutamate 402, and arginine 469. Active-site residues include histidine 514 and glutamate 516.

It belongs to the CTP synthase family. Homotetramer.

The enzyme catalyses UTP + L-glutamine + ATP + H2O = CTP + L-glutamate + ADP + phosphate + 2 H(+). It catalyses the reaction L-glutamine + H2O = L-glutamate + NH4(+). The catalysed reaction is UTP + NH4(+) + ATP = CTP + ADP + phosphate + 2 H(+). The protein operates within pyrimidine metabolism; CTP biosynthesis via de novo pathway; CTP from UDP: step 2/2. Its activity is regulated as follows. Allosterically activated by GTP, when glutamine is the substrate; GTP has no effect on the reaction when ammonia is the substrate. The allosteric effector GTP functions by stabilizing the protein conformation that binds the tetrahedral intermediate(s) formed during glutamine hydrolysis. Inhibited by the product CTP, via allosteric rather than competitive inhibition. In terms of biological role, catalyzes the ATP-dependent amination of UTP to CTP with either L-glutamine or ammonia as the source of nitrogen. Regulates intracellular CTP levels through interactions with the four ribonucleotide triphosphates. The protein is CTP synthase of Coxiella burnetii (strain CbuK_Q154) (Coxiella burnetii (strain Q154)).